We begin with the raw amino-acid sequence, 618 residues long: Camphene synthase, chloroplastic (618 aa).

A chloroplast-targeting transit peptide spans 1–51; the sequence is MALLSITPLVSRSCLSSSHEIKALRRTIPTLGICRPGKSVAHSINMCLTSV. Positions 369, 373, and 521 each coordinate Mg(2+). Positions 369-373 match the DDXXD motif motif; the sequence is DDMYD.

Belongs to the terpene synthase family. Tpsd subfamily. It depends on Mg(2+) as a cofactor. Requires Mn(2+) as cofactor. K(+) is required as a cofactor.

The protein resides in the plastid. Its subcellular location is the chloroplast. The enzyme catalyses (2E)-geranyl diphosphate = (1S,4R)-camphene + diphosphate. It participates in terpene metabolism; oleoresin biosynthesis. Functionally, involved in defensive oleoresin formation in conifers in response to insect attack or other injury. Involved in monoterpene (C10) olefins biosynthesis. This is Camphene synthase, chloroplastic (ag6) from Abies grandis (Grand fir).